The primary structure comprises 217 residues: MPPRPRFDRRAPVRELPNINDRISYPQLRVVDSDGSQLGVISREEALEVAKERELDLVLVSEKADPPVCRIMDYGKFKFEQEKKAKEAKKKSHQTEVKEVKMRYKIDQHDYDVRIGQAVRFLKAGDKVKCTVIFRGREIQHTALAETLLRRMAKDLEEKAEIQQAPKREGRNMIMFLTPRKTPLVKKEEKEAAPTKAVRTIPAPPRPTAAKVAAQQA.

Positions 179 to 217 (PRKTPLVKKEEKEAAPTKAVRTIPAPPRPTAAKVAAQQA) are disordered.

Belongs to the IF-3 family. In terms of assembly, monomer.

The protein resides in the cytoplasm. Its function is as follows. IF-3 binds to the 30S ribosomal subunit and shifts the equilibrium between 70S ribosomes and their 50S and 30S subunits in favor of the free subunits, thus enhancing the availability of 30S subunits on which protein synthesis initiation begins. The polypeptide is Translation initiation factor IF-3 (Parasynechococcus marenigrum (strain WH8102)).